The sequence spans 147 residues: MAIRLIRTDDDPVLRKKSRVVDKIDSRIHTLLDDMIETMYEADGVGLAAPQVGILKQVIVIDVGEGVIELINPEIIKETGSQCDVEGCLSLPGHSGEVERPAIVKVRGLNRQGKMVEIQGTELLARALCHEIDHLNGILFTDKIIKE.

Fe cation-binding residues include Cys-88 and His-130. Glu-131 is an active-site residue. His-134 lines the Fe cation pocket.

Belongs to the polypeptide deformylase family. Fe(2+) serves as cofactor.

The enzyme catalyses N-terminal N-formyl-L-methionyl-[peptide] + H2O = N-terminal L-methionyl-[peptide] + formate. In terms of biological role, removes the formyl group from the N-terminal Met of newly synthesized proteins. Requires at least a dipeptide for an efficient rate of reaction. N-terminal L-methionine is a prerequisite for activity but the enzyme has broad specificity at other positions. This is Peptide deformylase from Alkaliphilus metalliredigens (strain QYMF).